The primary structure comprises 149 residues: Nucleoside diphosphate kinase 1 (149 aa).

ATP-binding residues include lysine 9, phenylalanine 57, arginine 85, threonine 91, arginine 102, and asparagine 112. Histidine 115 (pros-phosphohistidine intermediate) is an active-site residue.

This sequence belongs to the NDK family. Mg(2+) is required as a cofactor. Autophosphorylated.

It catalyses the reaction a 2'-deoxyribonucleoside 5'-diphosphate + ATP = a 2'-deoxyribonucleoside 5'-triphosphate + ADP. The enzyme catalyses a ribonucleoside 5'-diphosphate + ATP = a ribonucleoside 5'-triphosphate + ADP. Functionally, major role in the synthesis of nucleoside triphosphates other than ATP. The ATP gamma phosphate is transferred to the NDP beta phosphate via a ping-pong mechanism, using a phosphorylated active-site intermediate. Also exhibits a kinase-like activity towards histone H1. This chain is Nucleoside diphosphate kinase 1 (NDPK1), found in Saccharum officinarum (Sugarcane).